The following is a 289-amino-acid chain: Acetyl-coenzyme A carboxylase carboxyl transferase subunit beta (289 aa).

The CoA carboxyltransferase N-terminal domain maps to Met-36–Glu-289. Zn(2+) contacts are provided by Cys-40, Cys-43, Cys-58, and Cys-61. The C4-type zinc finger occupies Cys-40 to Cys-61.

The protein belongs to the AccD/PCCB family. Acetyl-CoA carboxylase is a heterohexamer composed of biotin carboxyl carrier protein (AccB), biotin carboxylase (AccC) and two subunits each of ACCase subunit alpha (AccA) and ACCase subunit beta (AccD). It depends on Zn(2+) as a cofactor.

It is found in the cytoplasm. The enzyme catalyses N(6)-carboxybiotinyl-L-lysyl-[protein] + acetyl-CoA = N(6)-biotinyl-L-lysyl-[protein] + malonyl-CoA. Its pathway is lipid metabolism; malonyl-CoA biosynthesis; malonyl-CoA from acetyl-CoA: step 1/1. Its function is as follows. Component of the acetyl coenzyme A carboxylase (ACC) complex. Biotin carboxylase (BC) catalyzes the carboxylation of biotin on its carrier protein (BCCP) and then the CO(2) group is transferred by the transcarboxylase to acetyl-CoA to form malonyl-CoA. The chain is Acetyl-coenzyme A carboxylase carboxyl transferase subunit beta from Limosilactobacillus reuteri subsp. reuteri (strain JCM 1112) (Lactobacillus reuteri).